Consider the following 114-residue polypeptide: Protein gamma (114 aa).

This chain is Protein gamma (gamma), found in Bovine ephemeral fever virus (strain BB7721) (BEFV).